Reading from the N-terminus, the 20-residue chain is SSGAHGEEGSARMXKALTYF.

This sequence belongs to the cytochrome c oxidase subunit 6A family. Component of the cytochrome c oxidase (complex IV, CIV), a multisubunit enzyme composed of 14 subunits. The complex is composed of a catalytic core of 3 subunits MT-CO1, MT-CO2 and MT-CO3, encoded in the mitochondrial DNA, and 11 supernumerary subunits COX4I, COX5A, COX5B, COX6A, COX6B, COX6C, COX7A, COX7B, COX7C, COX8 and NDUFA4, which are encoded in the nuclear genome. The complex exists as a monomer or a dimer and forms supercomplexes (SCs) in the inner mitochondrial membrane with NADH-ubiquinone oxidoreductase (complex I, CI) and ubiquinol-cytochrome c oxidoreductase (cytochrome b-c1 complex, complex III, CIII), resulting in different assemblies (supercomplex SCI(1)III(2)IV(1) and megacomplex MCI(2)III(2)IV(2)). In terms of tissue distribution, liver specific isoform.

It localises to the mitochondrion inner membrane. It participates in energy metabolism; oxidative phosphorylation. In terms of biological role, component of the cytochrome c oxidase, the last enzyme in the mitochondrial electron transport chain which drives oxidative phosphorylation. The respiratory chain contains 3 multisubunit complexes succinate dehydrogenase (complex II, CII), ubiquinol-cytochrome c oxidoreductase (cytochrome b-c1 complex, complex III, CIII) and cytochrome c oxidase (complex IV, CIV), that cooperate to transfer electrons derived from NADH and succinate to molecular oxygen, creating an electrochemical gradient over the inner membrane that drives transmembrane transport and the ATP synthase. Cytochrome c oxidase is the component of the respiratory chain that catalyzes the reduction of oxygen to water. Electrons originating from reduced cytochrome c in the intermembrane space (IMS) are transferred via the dinuclear copper A center (CU(A)) of subunit 2 and heme A of subunit 1 to the active site in subunit 1, a binuclear center (BNC) formed by heme A3 and copper B (CU(B)). The BNC reduces molecular oxygen to 2 water molecules unsing 4 electrons from cytochrome c in the IMS and 4 protons from the mitochondrial matrix. The polypeptide is Cytochrome c oxidase subunit 6A1, mitochondrial (COX6A1) (Canis lupus familiaris (Dog)).